We begin with the raw amino-acid sequence, 472 residues long: Protein translocase subunit SecD (472 aa).

Transmembrane regions (helical) follow at residues 8 to 28 (ILFT…PLSG), 300 to 320 (TIIN…IIFY), 325 to 347 (VIAD…WTGA), 353 to 375 (GIAG…YERI), 396 to 416 (VFST…VLFF), and 424 to 444 (GFAV…LVVS).

It belongs to the SecD/SecF family. SecD subfamily. As to quaternary structure, forms a complex with SecF. Part of the essential Sec protein translocation apparatus which comprises SecA, SecYEG and auxiliary proteins SecDF. Other proteins may also be involved.

It is found in the cell inner membrane. Its function is as follows. Part of the Sec protein translocase complex. Interacts with the SecYEG preprotein conducting channel. SecDF uses the proton motive force (PMF) to complete protein translocation after the ATP-dependent function of SecA. The chain is Protein translocase subunit SecD from Petrotoga mobilis (strain DSM 10674 / SJ95).